Here is a 78-residue protein sequence, read N- to C-terminus: UPF0349 protein GK2958 (78 aa).

This sequence belongs to the UPF0349 family.

This Geobacillus kaustophilus (strain HTA426) protein is UPF0349 protein GK2958.